The primary structure comprises 542 residues: uncharacterized protein (542 aa).

A run of 5 helical transmembrane segments spans residues 4–23 (FVENQLLALVAIMGIGLLLG), 28–47 (FGFRLGVAAVLFVGLAFSTI), 51–70 (ITVPPLIYVVGLALFVYTIG), 91–113 (LALGAIIATTAIAWVVIKALGLA), and 160–182 (YSLTYPLGVLVVILTIAVCGGLF). RCK C-terminal domains follow at residues 190-272 (AKNA…LLGE) and 274-355 (VDGH…IFGD). The next 5 membrane-spanning stretches (helical) occupy residues 363–385 (FNLVPLVVGLSLGVLVGMMEFPL), 390–412 (ALSLGNAGGPLLIALLLGAMGRT), 425–447 (LALRQLGITMFLAAIGTTAGAGF), 457–479 (LLIIGVGALLTLVISVLVLVIGH), and 519–541 (YTSVYPLAMVAKIIAAQVLLFLL).

This sequence belongs to the AAE transporter (TC 2.A.81) family.

The protein resides in the cell membrane. This is an uncharacterized protein from Corynebacterium efficiens (strain DSM 44549 / YS-314 / AJ 12310 / JCM 11189 / NBRC 100395).